A 137-amino-acid polypeptide reads, in one-letter code: uncharacterized protein (137 aa).

The tract at residues 1-32 is disordered; it reads MRDHLPPGLPPDPFADDPCDPSAALDAVEPGQ.

The protein to M.tuberculosis Rv3412.

This is an uncharacterized protein from Mycobacterium leprae (strain TN).